The primary structure comprises 176 residues: ATP-dependent protease subunit HslV (176 aa).

Thr2 is an active-site residue. Residues Gly157, Cys160, and Thr163 each contribute to the Na(+) site.

Belongs to the peptidase T1B family. HslV subfamily. As to quaternary structure, a double ring-shaped homohexamer of HslV is capped on each side by a ring-shaped HslU homohexamer. The assembly of the HslU/HslV complex is dependent on binding of ATP.

It is found in the cytoplasm. The enzyme catalyses ATP-dependent cleavage of peptide bonds with broad specificity.. With respect to regulation, allosterically activated by HslU binding. Protease subunit of a proteasome-like degradation complex believed to be a general protein degrading machinery. The polypeptide is ATP-dependent protease subunit HslV (Ectopseudomonas mendocina (strain ymp) (Pseudomonas mendocina)).